Consider the following 231-residue polypeptide: 7-cyano-7-deazaguanine synthase (231 aa).

8-18 contributes to the ATP binding site; the sequence is FSGGQDSTTCL. Zn(2+) is bound by residues cysteine 188, cysteine 197, cysteine 200, and cysteine 203.

The protein belongs to the QueC family. Requires Zn(2+) as cofactor.

The enzyme catalyses 7-carboxy-7-deazaguanine + NH4(+) + ATP = 7-cyano-7-deazaguanine + ADP + phosphate + H2O + H(+). Its pathway is purine metabolism; 7-cyano-7-deazaguanine biosynthesis. In terms of biological role, catalyzes the ATP-dependent conversion of 7-carboxy-7-deazaguanine (CDG) to 7-cyano-7-deazaguanine (preQ(0)). The protein is 7-cyano-7-deazaguanine synthase of Salmonella paratyphi A (strain ATCC 9150 / SARB42).